A 551-amino-acid chain; its full sequence is HTH-type transcriptional regulator SgrR (551 aa).

The HTH marR-type domain occupies Met-1–Arg-116. Residues Leu-26 to Asp-49 constitute a DNA-binding region (H-T-H motif). The tract at residues Glu-163–Trp-492 is solute-binding.

In terms of biological role, activates the small RNA gene sgrS under glucose-phosphate stress conditions as well as yfdZ. Represses its own transcription under both stress and non-stress conditions. Might act as a sensor of the intracellular accumulation of phosphoglucose by binding these molecules in its C-terminal solute-binding domain. In Escherichia coli O6:K15:H31 (strain 536 / UPEC), this protein is HTH-type transcriptional regulator SgrR.